The sequence spans 452 residues: Pup--protein ligase (452 aa).

E9 is a Mg(2+) binding site. R53 serves as a coordination point for ATP. Y55 lines the Mg(2+) pocket. D57 functions as the Proton acceptor in the catalytic mechanism. E63 serves as a coordination point for Mg(2+). ATP is bound by residues T66 and W419.

Belongs to the Pup ligase/Pup deamidase family. Pup-conjugating enzyme subfamily.

The catalysed reaction is ATP + [prokaryotic ubiquitin-like protein]-L-glutamate + [protein]-L-lysine = ADP + phosphate + N(6)-([prokaryotic ubiquitin-like protein]-gamma-L-glutamyl)-[protein]-L-lysine.. Its pathway is protein degradation; proteasomal Pup-dependent pathway. It functions in the pathway protein modification; protein pupylation. In terms of biological role, catalyzes the covalent attachment of the prokaryotic ubiquitin-like protein modifier Pup to the proteasomal substrate proteins, thereby targeting them for proteasomal degradation. This tagging system is termed pupylation. The ligation reaction involves the side-chain carboxylate of the C-terminal glutamate of Pup and the side-chain amino group of a substrate lysine. This Parafrankia sp. (strain EAN1pec) protein is Pup--protein ligase.